Reading from the N-terminus, the 838-residue chain is MAKESLRIGVASTEPKRVKVYILEDNEWRDTGTGFCTGQCEQDKPHAYLLVRDEEQPERVLLKSKLEGNIEYQRQEETLIVWKDLQGQDIALSFEESTGCNALCEFICLVQKTFENNISLVSVRSNDDGMGSVHEIITGPVHLPSNDPQQNEETLMESLRILNENTSFEFLKNETVDFILNTNYLHTLINHFHIAEEKLLHKDLLLLSHIIKTLFLYNEREVLEQLIDDKHYMGVVGILEYDTDFPDCKASHRKCLQGVRPKFQEVIPLNDENMRQTINKTFRLQFLKDVVLIRFLDDHAFNLITDVMLTYQTTIIRCLQEGSFIDDLVNLYTNNADTSDSDLIERKRQGIRLLDECVQISCNLDPPDRSIFYKVLVKKGLFNVLDFAFNVETNSDIRILATDMIISIIEYDILLINSVRNEVDDSPFAATNEDSNINTGLIDEGGADSADNNCNGNSAVKAGESNGAESPIAPPGSRSPSRHTSDISLLLILSKILLTDQSPGLKEQAFQALITLLDPEDFMGEEYEDQSNLESLMKFYANSKLREKPSTPPQFQLLEYFTKFYEQVAPVLFQSFISGEVEGMDDQLLLRLVKLVDLLIHEHDIMLSRGFILENGILLTIGKLMEPSHIIQLRLAAVRCIKGIVAVNDEFYHNYLISKNLFDPICQLLQENLYFDNMANSCVLDLFKVISARFGQDQEYAEVSTKNFLVLNQYLVERFGPLLEKVDYVPYTSSMIQMSRVGRDAINKQQDNNGERNTTTGGEADNEEFDVMGAMDSSLASESDGENNENNEESPYGGAQNSKRSFSDIEDNTIGVEKGNPEPGLPIKKLAEEISESS.

Disordered stretches follow at residues 452 to 482 (NNCNGNSAVKAGESNGAESPIAPPGSRSPSR) and 745 to 838 (AINK…SESS). Over residues 747–761 (NKQQDNNGERNTTTG) the composition is skewed to polar residues. Residues 783-792 (SDGENNENNE) show a composition bias toward acidic residues.

In terms of assembly, regulatory subunit 3 (R3) of the histone H2A phosphatase complex (HTP-C) consisting of PPH3, PSY2 and PSY4.

It localises to the nucleus. Its function is as follows. Core regulatory subunit of the histone H2A phosphatase complex, which dephosphorylates H2AS128ph (gamma-H2A) that has been displaced from sites of DNA lesions in the double-stranded DNA break repair process. Dephosphorylation is necessary for efficient recovery from the DNA damage checkpoint. The chain is Serine/threonine-protein phosphatase 4 regulatory subunit 3 (PSY2) from Eremothecium gossypii (strain ATCC 10895 / CBS 109.51 / FGSC 9923 / NRRL Y-1056) (Yeast).